Consider the following 99-residue polypeptide: uncharacterized protein (99 aa).

This is an uncharacterized protein from Dictyostelium discoideum (Social amoeba).